The sequence spans 159 residues: Na(+)/H(+) antiporter subunit E1 (159 aa).

The next 4 helical transmembrane spans lie at 1–21, 27–47, 49–69, and 101–121; these read MAIQ…LSGS, LLLG…ILPG, FYFI…VELL, and WQIV…VLGI.

Belongs to the CPA3 antiporters (TC 2.A.63) subunit E family. May form a heterooligomeric complex that consists of seven subunits: mnhA1, mnhB1, mnhC1, mnhD1, mnhE1, mnhF1 and mnhG1.

The protein localises to the cell membrane. Its function is as follows. Mnh complex is a Na(+)/H(+) antiporter involved in Na(+) excretion. In Staphylococcus haemolyticus (strain JCSC1435), this protein is Na(+)/H(+) antiporter subunit E1 (mnhE1).